The chain runs to 161 residues: MEIGNVKADVNLVLNLREAERHRRYFDYFIDEILWLSFLGMSETSLKEEEVTLGGVKETREEECSDDKLVLDICLKRKRLDEEEEEEVVEEENDGFKTPTRPENRIPIVRECPPAPMKRSSEMFRGRTMYCRRRLSFLPEDDVNSFITDLQWRTTTMTIKK.

A compositionally biased stretch (acidic residues) spans 84–93 (EEEEVVEEEN). The disordered stretch occupies residues 84–106 (EEEEVVEEENDGFKTPTRPENRI).

Functionally, probable cyclin-dependent protein kinase (CDK) inhibitor that functions as a repressor of mitosis in the endoreduplication cell cycle. This chain is Cyclin-dependent protein kinase inhibitor SMR12, found in Arabidopsis thaliana (Mouse-ear cress).